The chain runs to 93 residues: Small ribosomal subunit protein uS19 (93 aa).

This sequence belongs to the universal ribosomal protein uS19 family.

Protein S19 forms a complex with S13 that binds strongly to the 16S ribosomal RNA. This chain is Small ribosomal subunit protein uS19, found in Leptospira borgpetersenii serovar Hardjo-bovis (strain JB197).